Here is a 459-residue protein sequence, read N- to C-terminus: Acetyltransferase pigO (459 aa).

It belongs to the trichothecene O-acetyltransferase family.

The protein operates within secondary metabolite biosynthesis. In terms of biological role, acetyltransferase; part of the gene cluster that mediates the biosynthesis of azaphilone pigments (MonAzPs), a complex mixture of compounds with a common azaphilone skeleton very widely used as food colorants. PigM and pigO are involved in the elimination of the omega-1 alcohol with pigM acting as an O-acetyltransferase that synthesizes the O-11 acetyl intermediate whereas pigO eliminates acetic acid to yield an intermediate with a C10(11) double bond. The first step of the pathway is performed by the nrPKS pigA that forms the hexaketide precursor from successive condensations of five malonyl-CoA units, with a simple acetyl-CoA starter unit. The role of esterase pigG is not clear, but it may play at most a supplementary role in the formation of the benzaldehyde produced by the pigA nrPKS. This very reactive benzaldehyde is intercepted by the pigC ketoreductase that to provide the first stable enzyme-free MonAzPs intermediate, 6-(4-hydroxy-2-oxopentyl)-3-methyl-2,4-dioxocyclohexane carbaldehyde, also known as M7PKS-1. The FAD-dependent monooxygenase pigN hydroxylates M7PKS-1 at C-4, which triggers the formation of the pyran ring. PigJ, pigK and pigD are involved in the acetylation of the pyran ring. PigJ and pigK form the two subunits of a dedicated fungal FAS that produces the side chain fatty acyl moiety of MonAzPs and pigD transfers the fatty acyl chain to the C-4 alcohol. PigM and pigO are involved in the elimination of the omega-1 alcohol. PigM acts as an O-acetyltransferase that synthesizes the putative O-11 acetyl intermediate whereas pigO eliminates acetic acid to yield an intermediate with a C10(11) double bond. The dehydration of the C-11 alcohol followed by the reduction of the C6(7) double bond by the NAD(P)H-dependent oxidoreductase pigE increases the electrophilicity of the C-5 ketone of the resulting acyl benzopyran. This in turn sets up the C-5 ketone for an intramolecular Knoevenagel aldol condensation with the C-20 enol of the side chain. This condensation affords the characteristic linear tricyclic carbon skeletons of the yellow pigments that serve as the common precursors for the classical yellow pigments monascin and ankaflavin, orange pigments rubopunctatin and monascorubrin, and red pigments ribropunctamine and monascorubramine. The FAD-dependent oxidoreductase pigF is especially invoved in the biosynthesis of orange and red pigments via desaturation of C6(7). The chain is Acetyltransferase pigO from Monascus ruber (Mold).